Here is a 352-residue protein sequence, read N- to C-terminus: Alanine racemase (352 aa).

Lys-33 (proton acceptor; specific for D-alanine) is an active-site residue. N6-(pyridoxal phosphate)lysine is present on Lys-33. Arg-129 provides a ligand contact to substrate. Residue Tyr-250 is the Proton acceptor; specific for L-alanine of the active site. A substrate-binding site is contributed by Met-298.

It belongs to the alanine racemase family. The cofactor is pyridoxal 5'-phosphate.

It carries out the reaction L-alanine = D-alanine. It functions in the pathway amino-acid biosynthesis; D-alanine biosynthesis; D-alanine from L-alanine: step 1/1. Functionally, catalyzes the interconversion of L-alanine and D-alanine. May also act on other amino acids. This Neisseria meningitidis serogroup A / serotype 4A (strain DSM 15465 / Z2491) protein is Alanine racemase (alr).